The chain runs to 444 residues: Homogentisate 1,2-dioxygenase (444 aa).

Residue H298 is the Proton acceptor of the active site. Fe cation is bound by residues H341 and E347. Homogentisate contacts are provided by Y356 and H377. H377 is a binding site for Fe cation.

It belongs to the homogentisate dioxygenase family. Hexamer; dimer of trimers. Requires Fe cation as cofactor.

The catalysed reaction is homogentisate + O2 = 4-maleylacetoacetate + H(+). Its pathway is amino-acid degradation; L-phenylalanine degradation; acetoacetate and fumarate from L-phenylalanine: step 4/6. Involved in the catabolism of homogentisate (2,5-dihydroxyphenylacetate or 2,5-OH-PhAc), a central intermediate in the degradation of phenylalanine and tyrosine. Catalyzes the oxidative ring cleavage of the aromatic ring of homogentisate to yield maleylacetoacetate. This is Homogentisate 1,2-dioxygenase from Burkholderia orbicola (strain AU 1054).